The following is a 214-amino-acid chain: Thymidylate kinase (214 aa).

An ATP-binding site is contributed by 10–17 (GPDGAGKT).

The protein belongs to the thymidylate kinase family.

It catalyses the reaction dTMP + ATP = dTDP + ADP. Phosphorylation of dTMP to form dTDP in both de novo and salvage pathways of dTTP synthesis. The protein is Thymidylate kinase of Levilactobacillus brevis (strain ATCC 367 / BCRC 12310 / CIP 105137 / JCM 1170 / LMG 11437 / NCIMB 947 / NCTC 947) (Lactobacillus brevis).